An 819-amino-acid polypeptide reads, in one-letter code: Protein O-mannosyl-transferase tmem260 (819 aa).

The segment covering 1–10 (MNNSPTLSNT) has biased composition (polar residues). A disordered region spans residues 1-68 (MNNSPTLSNT…NNNNNIINVN (68 aa)). Low complexity predominate over residues 15–68 (NNNNNSNSNSNSNNNNNNNNNNNNNSNNNNNNNNNVNRNVNNRNNNNNNIINVN). N-linked (GlcNAc...) asparagine glycans are attached at residues Asn18, Asn38, and Asn70. 7 helical membrane passes run 113 to 133 (IACIVLLFISCTIIYSMTQYP), 152 to 172 (VAHPPGYPLFTFLGYIFSHII), 185 to 205 (FMSSMIGSIASIFIYLTVYLW), 210 to 230 (WCGLLSAYMFTFSPLIWMYQI), 232 to 252 (GEVFSMNNMFVAMLMFLGVWY), 285 to 305 (LTNQHTLVLIVIPFAFWLMFI), and 316 to 336 (ILSNLVFYTLIGLSPYLLLFI). The N-linked (GlcNAc...) asparagine glycan is linked to Asn349. Helical transmembrane passes span 391 to 411 (LIIQFGYIGLALSLIGLLNLL), 427 to 447 (MIIFSFLFYITFFFNLCNLPI), 459 to 479 (FFMQPNVIISITMGLGIKSIF), and 505 to 525 (YLLPIIIILLVGNQIGFNYNL). Residues Asn531, Asn686, Asn693, and Asn783 are each glycosylated (N-linked (GlcNAc...) asparagine).

This sequence belongs to the glycosyltransferase 117 (GT117) family.

The protein resides in the endoplasmic reticulum membrane. The catalysed reaction is a di-trans,poly-cis-dolichyl beta-D-mannosyl phosphate + L-seryl-[protein] = 3-O-(alpha-D-mannosyl)-L-seryl-[protein] + a di-trans,poly-cis-dolichyl phosphate + H(+). The enzyme catalyses a di-trans,poly-cis-dolichyl beta-D-mannosyl phosphate + L-threonyl-[protein] = 3-O-(alpha-D-mannosyl)-L-threonyl-[protein] + a di-trans,poly-cis-dolichyl phosphate + H(+). Functionally, O-mannosyl-transferase that transfers mannosyl residues to the hydroxyl group of serine or threonine residues of proteins. In Dictyostelium discoideum (Social amoeba), this protein is Protein O-mannosyl-transferase tmem260.